Consider the following 89-residue polypeptide: uncharacterized protein (89 aa).

Residues 20 to 39 (SFAMTTYLNLFVKLLIFLYI) form a helical membrane-spanning segment.

The protein localises to the membrane. This is an uncharacterized protein from Escherichia coli (strain K12).